We begin with the raw amino-acid sequence, 733 residues long: Protein ROG3 (733 aa).

The short motif at 460-463 is the PY-motif element; it reads PPNY. Residues 518 to 566 are disordered; sequence RDNLGLPPSASSAAASRSLSPLLNVPAPEDGTERILPQSALGPNSGSVP. Residues 523-540 are compositionally biased toward low complexity; sequence LPPSASSAAASRSLSPLL. The PY-motif signature appears at 625-628; the sequence is PPSY. 2 disordered regions span residues 636-658 and 693-733; these read QPRKPSRVHSRNSSTTLSSSIPT and ELTS…GNKR. The span at 646–658 shows a compositional bias: low complexity; it reads RNSSTTLSSSIPT.

It belongs to the arrestin family. Interacts with RSP5 via its 2 PY-motifs.

Functionally, involved in resistance to GST substrate o-dinitrobenzene (o-DNB). The chain is Protein ROG3 (ROG3) from Saccharomyces cerevisiae (strain ATCC 204508 / S288c) (Baker's yeast).